A 171-amino-acid polypeptide reads, in one-letter code: Antimicrobial protein CAP18 (171 aa).

A signal peptide spans 1–29 (METHKHGPSLAWWSLLLLLLGLLMPPAIA). Disulfide bonds link Cys85–Cys96 and Cys107–Cys124.

It belongs to the cathelicidin family. As to expression, neutrophils.

Its subcellular location is the secreted. Functionally, CAP18 binds to the lipid A moiety of bacterial lipopolysaccharides (LPS), a glycolipid present in the outer membrane of all Gram-negative bacteria. Has antibiotic activity. This Oryctolagus cuniculus (Rabbit) protein is Antimicrobial protein CAP18 (CAP18).